The sequence spans 109 residues: Membrane-bound lysozyme inhibitor of C-type lysozyme (109 aa).

Residues 1 to 17 (MTMKKLLIIILPVLLSG) form the signal peptide. Cys-18 is lipidated: N-palmitoyl cysteine. The S-diacylglycerol cysteine moiety is linked to residue Cys-18. Residues Cys-37 and Cys-102 are joined by a disulfide bond.

Belongs to the MliC family. Type 1 subfamily. As to quaternary structure, monomer.

It is found in the cell outer membrane. Functionally, specifically inhibits C-type lysozymes. This is Membrane-bound lysozyme inhibitor of C-type lysozyme from Escherichia coli (strain K12).